We begin with the raw amino-acid sequence, 422 residues long: Zinc-regulated transporter 2 (422 aa).

The Extracellular portion of the chain corresponds to 1 to 27 (MVDLIARDDSVDTCQASNGYNGHAGLR). A helical transmembrane segment spans residues 28–48 (ILAVFIILISSGLGVYFPILS). At 49 to 60 (SRYSFIRLPNWC) the chain is on the cytoplasmic side. The helical transmembrane segment at 61 to 81 (FFIAKFFGSGVIVATAFVHLL) threads the bilayer. Residues 82–99 (QPAAEALGDECLGGTFAE) lie on the Extracellular side of the membrane. Residues 100 to 120 (YPWAFGICLMSLFLLFFTEII) form a helical membrane-spanning segment. The Cytoplasmic portion of the chain corresponds to 121–262 (THYFVAKTLG…EEDKEQYLNQ (142 aa)). 4 positions are modified to phosphoserine: serine 148, serine 149, serine 162, and serine 170. Threonine 188 is subject to Phosphothreonine. Residues 263-283 (ILAVFILEFGIIFHSVFVGLS) traverse the membrane as a helical segment. The Extracellular portion of the chain corresponds to 284–290 (LSVAGEE). Residues 291 to 311 (FETLFIVLTFHQMFEGLGLGT) traverse the membrane as a helical segment. Residues 312 to 326 (RVAETNWPESKKYMP) are Cytoplasmic-facing. The chain crosses the membrane as a helical span at residues 327–347 (WLMGLAFTLTSPIAVAVGIGV). The Extracellular portion of the chain corresponds to 348–358 (RHSWIPGSRRA). Residues 359–379 (LIANGVFDSISSGILIYTGLV) traverse the membrane as a helical segment. At 380-400 (ELMAHEFLYSNQFKGPDGLKK) the chain is on the cytoplasmic side. The chain crosses the membrane as a helical span at residues 401–421 (MLSAYLIMCCGAALMALLGKW). A topological domain (extracellular) is located at residue alanine 422.

Belongs to the ZIP transporter (TC 2.A.5) family.

Its subcellular location is the membrane. Its function is as follows. Low-affinity zinc transport protein. Active in zinc-replete cells and is time-, temperature- and concentration-dependent and prefers zinc over other metals as its substrate. This is Zinc-regulated transporter 2 (ZRT2) from Saccharomyces cerevisiae (strain ATCC 204508 / S288c) (Baker's yeast).